A 227-amino-acid chain; its full sequence is GRF-interacting factor 1 (227 aa).

Low complexity predominate over residues alanine 124–alanine 139. Disordered stretches follow at residues alanine 124–glutamate 160 and glycine 188–serine 227. Residues glutamate 217–serine 227 are compositionally biased toward basic and acidic residues.

It belongs to the SS18 family. As to quaternary structure, interacts with GRF4. Highly expressed in internodes, nodes, developing spikelets and developing anthers. Expressed at low levels in roots and mature glumes.

It localises to the nucleus. Its subcellular location is the cytoplasm. In terms of biological role, transcription coactivator that plays a role in the regulation of meristematic function in leaves, stems and inflorescences. May regulate leaf size, length of stem internodes, and seed size by promoting cell expansion. Transcription coactivator that plays a role in the regulation of grain size. Component of a network formed by the microRNA396 (miRNA396), the GRFs and their interacting factors (GIFs) acting in the regulation of meristem function, at least partially through the control of cell proliferation. Component of the miRNA396c-GRF4-GIF1 regulatory module that plays an important role in grain size determination. In Oryza sativa subsp. japonica (Rice), this protein is GRF-interacting factor 1.